A 133-amino-acid polypeptide reads, in one-letter code: Large ribosomal subunit protein bL20 (133 aa).

It belongs to the bacterial ribosomal protein bL20 family.

Binds directly to 23S ribosomal RNA and is necessary for the in vitro assembly process of the 50S ribosomal subunit. It is not involved in the protein synthesizing functions of that subunit. The sequence is that of Large ribosomal subunit protein bL20 from Mesorhizobium japonicum (strain LMG 29417 / CECT 9101 / MAFF 303099) (Mesorhizobium loti (strain MAFF 303099)).